Reading from the N-terminus, the 245-residue chain is tRNA (guanine-N(1)-)-methyltransferase (245 aa).

S-adenosyl-L-methionine is bound by residues G111 and 131–136; that span reads MGDYVL.

The protein belongs to the RNA methyltransferase TrmD family. Homodimer.

The protein localises to the cytoplasm. It catalyses the reaction guanosine(37) in tRNA + S-adenosyl-L-methionine = N(1)-methylguanosine(37) in tRNA + S-adenosyl-L-homocysteine + H(+). Specifically methylates guanosine-37 in various tRNAs. The polypeptide is tRNA (guanine-N(1)-)-methyltransferase (Staphylococcus epidermidis (strain ATCC 35984 / DSM 28319 / BCRC 17069 / CCUG 31568 / BM 3577 / RP62A)).